A 352-amino-acid polypeptide reads, in one-letter code: N-acetyl-gamma-glutamyl-phosphate reductase (352 aa).

The active site involves Cys-149.

It belongs to the NAGSA dehydrogenase family. Type 1 subfamily.

The protein resides in the cytoplasm. It carries out the reaction N-acetyl-L-glutamate 5-semialdehyde + phosphate + NADP(+) = N-acetyl-L-glutamyl 5-phosphate + NADPH + H(+). It functions in the pathway amino-acid biosynthesis; L-arginine biosynthesis; N(2)-acetyl-L-ornithine from L-glutamate: step 3/4. Its function is as follows. Catalyzes the NADPH-dependent reduction of N-acetyl-5-glutamyl phosphate to yield N-acetyl-L-glutamate 5-semialdehyde. The polypeptide is N-acetyl-gamma-glutamyl-phosphate reductase (Polynucleobacter asymbioticus (strain DSM 18221 / CIP 109841 / QLW-P1DMWA-1) (Polynucleobacter necessarius subsp. asymbioticus)).